A 296-amino-acid polypeptide reads, in one-letter code: Acetylglutamate kinase (296 aa).

Substrate-binding positions include Gly-69–Gly-70, Arg-91, and Asn-193.

This sequence belongs to the acetylglutamate kinase family. ArgB subfamily.

The protein resides in the cytoplasm. It carries out the reaction N-acetyl-L-glutamate + ATP = N-acetyl-L-glutamyl 5-phosphate + ADP. The protein operates within amino-acid biosynthesis; L-arginine biosynthesis; N(2)-acetyl-L-ornithine from L-glutamate: step 2/4. In terms of biological role, catalyzes the ATP-dependent phosphorylation of N-acetyl-L-glutamate. The protein is Acetylglutamate kinase of Paracidovorax citrulli (strain AAC00-1) (Acidovorax citrulli).